Here is a 504-residue protein sequence, read N- to C-terminus: Deoxyguanosinetriphosphate triphosphohydrolase (504 aa).

The HD domain maps to 66–273 (RLTHSLEVQQ…MEAADDISYC (208 aa)).

It belongs to the dGTPase family. Type 1 subfamily. Homotetramer. Requires Mg(2+) as cofactor.

It carries out the reaction dGTP + H2O = 2'-deoxyguanosine + triphosphate + H(+). Functionally, dGTPase preferentially hydrolyzes dGTP over the other canonical NTPs. The chain is Deoxyguanosinetriphosphate triphosphohydrolase from Klebsiella pneumoniae (strain 342).